The primary structure comprises 127 residues: NADPH-dependent 7-cyano-7-deazaguanine reductase (127 aa).

C40 (thioimide intermediate) is an active-site residue. D47 functions as the Proton donor in the catalytic mechanism. Substrate is bound by residues 62-64 and 81-82; these read VEL and HE.

The protein belongs to the GTP cyclohydrolase I family. QueF type 1 subfamily.

Its subcellular location is the cytoplasm. The catalysed reaction is 7-aminomethyl-7-carbaguanine + 2 NADP(+) = 7-cyano-7-deazaguanine + 2 NADPH + 3 H(+). The protein operates within tRNA modification; tRNA-queuosine biosynthesis. Its function is as follows. Catalyzes the NADPH-dependent reduction of 7-cyano-7-deazaguanine (preQ0) to 7-aminomethyl-7-deazaguanine (preQ1). The polypeptide is NADPH-dependent 7-cyano-7-deazaguanine reductase (Campylobacter lari (strain RM2100 / D67 / ATCC BAA-1060)).